A 434-amino-acid chain; its full sequence is MTTLQVASSLNDIAQQTRQAASLLAMLSTEAKNQAIAAVAQALESAKEEILQANIADCEAATAEGIAKPLYKRLQLDEHKLRDAIAGVRDVGKLADPIGQVQIQRELDTGLVLKRITCPLGVLGIIFEARPEAAIQIISLAIKSGNGVILKCGKEAVRSCEAIVKAVKQGLSTTDVNPDVVQLLTTREETLELLRLDKYVDLIIPRGSNSFVRFVQENTRIPVLGHADGICHVYIDKSADIEKAIAVSVDAKVQYPAACNAIETLLVHHSIAAEFLPKVAQALAERQVELKGDERTLQILPEIAAATAIDWETEYSDFILSIKIVDSLTEAIAHINQYGSRHTDAIITEDVAAVETFFGLVNSAGVFHNCSTRFADGFRYGFGAEVGISTQQMPPRGPVGLEGLVTYKYQMTGTGHIVATYTGENAKPFTHQDF.

Belongs to the gamma-glutamyl phosphate reductase family.

The protein resides in the cytoplasm. The enzyme catalyses L-glutamate 5-semialdehyde + phosphate + NADP(+) = L-glutamyl 5-phosphate + NADPH + H(+). It functions in the pathway amino-acid biosynthesis; L-proline biosynthesis; L-glutamate 5-semialdehyde from L-glutamate: step 2/2. Functionally, catalyzes the NADPH-dependent reduction of L-glutamate 5-phosphate into L-glutamate 5-semialdehyde and phosphate. The product spontaneously undergoes cyclization to form 1-pyrroline-5-carboxylate. The protein is Gamma-glutamyl phosphate reductase of Trichormus variabilis (strain ATCC 29413 / PCC 7937) (Anabaena variabilis).